Reading from the N-terminus, the 278-residue chain is Bifunctional protein FolD (278 aa).

NADP(+)-binding positions include G165–S167 and S190.

The protein belongs to the tetrahydrofolate dehydrogenase/cyclohydrolase family. As to quaternary structure, homodimer.

The enzyme catalyses (6R)-5,10-methylene-5,6,7,8-tetrahydrofolate + NADP(+) = (6R)-5,10-methenyltetrahydrofolate + NADPH. It catalyses the reaction (6R)-5,10-methenyltetrahydrofolate + H2O = (6R)-10-formyltetrahydrofolate + H(+). It functions in the pathway one-carbon metabolism; tetrahydrofolate interconversion. Catalyzes the oxidation of 5,10-methylenetetrahydrofolate to 5,10-methenyltetrahydrofolate and then the hydrolysis of 5,10-methenyltetrahydrofolate to 10-formyltetrahydrofolate. The protein is Bifunctional protein FolD of Clostridium tetani (strain Massachusetts / E88).